A 509-amino-acid chain; its full sequence is Aspartic proteinase oryzasin-1 (509 aa).

The signal sequence occupies residues 1–24 (MGTRSVALVLLAAVLLQALLPASA). Residues 25–67 (AEGLVRIALKKRPIDENSRVAARLSGEEGARRLGLRGANSLGG) constitute a propeptide, activation peptide. The 422-residue stretch at 85-506 (YFGEIGVGTP…DYGKMRVGFA (422 aa)) folds into the Peptidase A1 domain. The active site involves Asp103. Cysteines 116 and 122 form a disulfide. Residue Asn252 is glycosylated (N-linked (GlcNAc...) asparagine). An intrachain disulfide couples Cys281 to Cys285. Asp290 is an active-site residue. In terms of domain architecture, Saposin B-type spans 315-420 (VVSQECKTVV…NQLCDKLPSP (106 aa)). 4 disulfides stabilise this stretch: Cys320/Cys414, Cys345/Cys386, Cys351/Cys383, and Cys428/Cys465. N-linked (GlcNAc...) asparagine glycosylation occurs at Asn400.

It belongs to the peptidase A1 family.

The protein resides in the vacuole. In terms of biological role, involved in the breakdown of propeptides of storage proteins in protein-storage vacuoles. This is Aspartic proteinase oryzasin-1 from Oryza sativa subsp. japonica (Rice).